Consider the following 217-residue polypeptide: Cytochrome b5 domain-containing protein 1 (217 aa).

A Cytochrome b5 heme-binding domain is found at P6–H72. The heme site is built by H41 and H72.

Belongs to the cytochrome b5 family.

It is found in the cytoplasm. It localises to the cytoskeleton. The protein resides in the cilium axoneme. Functionally, radial spoke stalk protein that binds heme under oxidizing conditions. Required for the coordinated beating of multiple cilia maybe by functioning in a redox signaling pathway. The sequence is that of Cytochrome b5 domain-containing protein 1 (cyb5d1) from Xenopus laevis (African clawed frog).